The sequence spans 995 residues: Integrator complex subunit 8 (995 aa).

Thr18 is subject to Phosphothreonine. The WFEF motif motif lies at 24–29 (WFEFLL). TPR repeat units follow at residues 250-288 (CQVC…IAEI), 320-356 (SQQL…SLPV), 570-603 (VYIL…VTEF), and 833-866 (HSWL…CSDF).

The protein belongs to the Integrator subunit 8 family. Component of the Integrator complex, composed of core subunits INTS1, INTS2, INTS3, INTS4, INTS5, INTS6, INTS7, INTS8, INTS9/RC74, INTS10, INTS11/CPSF3L, INTS12, INTS13, INTS14 and INTS15. The core complex associates with protein phosphatase 2A subunits PPP2CA and PPP2R1A, to form the Integrator-PP2A (INTAC) complex.

It localises to the nucleus. It is found in the chromosome. In terms of biological role, component of the integrator complex, a multiprotein complex that terminates RNA polymerase II (Pol II) transcription in the promoter-proximal region of genes. The integrator complex provides a quality checkpoint during transcription elongation by driving premature transcription termination of transcripts that are unfavorably configured for transcriptional elongation: the complex terminates transcription by (1) catalyzing dephosphorylation of the C-terminal domain (CTD) of Pol II subunit POLR2A/RPB1 and SUPT5H/SPT5, (2) degrading the exiting nascent RNA transcript via endonuclease activity and (3) promoting the release of Pol II from bound DNA. The integrator complex is also involved in terminating the synthesis of non-coding Pol II transcripts, such as enhancer RNAs (eRNAs), small nuclear RNAs (snRNAs), telomerase RNAs and long non-coding RNAs (lncRNAs). Within the integrator complex, INTS8 is required for the recruitment of protein phosphatase 2A (PP2A) to transcription pause-release checkpoint. The chain is Integrator complex subunit 8 from Homo sapiens (Human).